A 369-amino-acid chain; its full sequence is Glutamate 5-kinase (369 aa).

K9 serves as a coordination point for ATP. S49, D136, and N148 together coordinate substrate. ATP is bound by residues 168–169 (TD) and 210–216 (TGGMLTK). A PUA domain is found at 275–355 (QGEIYVDQGA…KGVVIHRDDW (81 aa)).

It belongs to the glutamate 5-kinase family.

The protein resides in the cytoplasm. It carries out the reaction L-glutamate + ATP = L-glutamyl 5-phosphate + ADP. Its pathway is amino-acid biosynthesis; L-proline biosynthesis; L-glutamate 5-semialdehyde from L-glutamate: step 1/2. Its function is as follows. Catalyzes the transfer of a phosphate group to glutamate to form L-glutamate 5-phosphate. The protein is Glutamate 5-kinase of Streptococcus sanguinis (strain SK36).